A 73-amino-acid chain; its full sequence is Translation initiation factor IF-1 (73 aa).

The 73-residue stretch at 1–73 (MAKKEGALEL…TRGRIVYRHK (73 aa)) folds into the S1-like domain.

It belongs to the IF-1 family. In terms of assembly, component of the 30S ribosomal translation pre-initiation complex which assembles on the 30S ribosome in the order IF-2 and IF-3, IF-1 and N-formylmethionyl-tRNA(fMet); mRNA recruitment can occur at any time during PIC assembly.

It localises to the cytoplasm. One of the essential components for the initiation of protein synthesis. Stabilizes the binding of IF-2 and IF-3 on the 30S subunit to which N-formylmethionyl-tRNA(fMet) subsequently binds. Helps modulate mRNA selection, yielding the 30S pre-initiation complex (PIC). Upon addition of the 50S ribosomal subunit IF-1, IF-2 and IF-3 are released leaving the mature 70S translation initiation complex. The polypeptide is Translation initiation factor IF-1 (Cutibacterium acnes (strain DSM 16379 / KPA171202) (Propionibacterium acnes)).